The sequence spans 340 residues: Toxin coregulated pilus biosynthesis protein E (340 aa).

A run of 3 helical transmembrane segments spans residues 108-131, 146-161, and 312-333; these read AISS…GYSV, WPGV…FSLY, and NISL…FSLV.

It belongs to the GSP F family.

It localises to the cell inner membrane. Its function is as follows. Probably involved in cholera toxin receptor (GM1) interaction in order to bring the cells within close proximity of the ganglioside for efficient toxin delivery. In Vibrio cholerae serotype O1 (strain ATCC 39315 / El Tor Inaba N16961), this protein is Toxin coregulated pilus biosynthesis protein E (tcpE).